A 488-amino-acid chain; its full sequence is Protein nucleotidyltransferase YdiU (488 aa).

ATP contacts are provided by Gly-91, Gly-93, Arg-94, Lys-114, Asp-126, Gly-127, Arg-177, and Arg-184. The active-site Proton acceptor is Asp-253. Mg(2+) contacts are provided by Asn-254 and Asp-263. Asp-263 is an ATP binding site.

It belongs to the SELO family. Mg(2+) serves as cofactor. It depends on Mn(2+) as a cofactor.

It catalyses the reaction L-seryl-[protein] + ATP = 3-O-(5'-adenylyl)-L-seryl-[protein] + diphosphate. It carries out the reaction L-threonyl-[protein] + ATP = 3-O-(5'-adenylyl)-L-threonyl-[protein] + diphosphate. The catalysed reaction is L-tyrosyl-[protein] + ATP = O-(5'-adenylyl)-L-tyrosyl-[protein] + diphosphate. The enzyme catalyses L-histidyl-[protein] + UTP = N(tele)-(5'-uridylyl)-L-histidyl-[protein] + diphosphate. It catalyses the reaction L-seryl-[protein] + UTP = O-(5'-uridylyl)-L-seryl-[protein] + diphosphate. It carries out the reaction L-tyrosyl-[protein] + UTP = O-(5'-uridylyl)-L-tyrosyl-[protein] + diphosphate. Its function is as follows. Nucleotidyltransferase involved in the post-translational modification of proteins. It can catalyze the addition of adenosine monophosphate (AMP) or uridine monophosphate (UMP) to a protein, resulting in modifications known as AMPylation and UMPylation. The chain is Protein nucleotidyltransferase YdiU from Bacillus cereus (strain ATCC 14579 / DSM 31 / CCUG 7414 / JCM 2152 / NBRC 15305 / NCIMB 9373 / NCTC 2599 / NRRL B-3711).